Reading from the N-terminus, the 131-residue chain is D-ribose pyranase (131 aa).

His-20 acts as the Proton donor in catalysis. Residues Asp-28, His-98, and 120–122 contribute to the substrate site; that span reads YAN.

This sequence belongs to the RbsD / FucU family. RbsD subfamily. Homodecamer.

It is found in the cytoplasm. It carries out the reaction beta-D-ribopyranose = beta-D-ribofuranose. The protein operates within carbohydrate metabolism; D-ribose degradation; D-ribose 5-phosphate from beta-D-ribopyranose: step 1/2. In terms of biological role, catalyzes the interconversion of beta-pyran and beta-furan forms of D-ribose. The sequence is that of D-ribose pyranase from Symbiobacterium thermophilum (strain DSM 24528 / JCM 14929 / IAM 14863 / T).